Consider the following 302-residue polypeptide: Vomeronasal type-1 receptor 48 (302 aa).

Residues 1–16 (MNENSRLHTHSNIRNT) lie on the Extracellular side of the membrane. The chain crosses the membrane as a helical span at residues 17–37 (FFSEIGIGISGNSFLLLFHII). At 38-49 (KFFRGHRPRLTD) the chain is on the cytoplasmic side. A helical transmembrane segment spans residues 50–70 (LPIGLLSLIHLLMLLVAAVIA). Residues 71–91 (TDIFISWRGWNDIICKFLVYL) lie on the Extracellular side of the membrane. A disulfide bridge links C85 with C172. The helical transmembrane segment at 92 to 114 (YRSLRGLSLCTTSMLSVLQAIIL) threads the bilayer. At 115 to 131 (SPRSYCLAKFKRKSSHN) the chain is on the cytoplasmic side. Residues 132 to 152 (ISCAIIFLSVLYMSISSHLLI) form a helical membrane-spanning segment. The Extracellular segment spans residues 153-193 (SITATPNLTMNDFLYVSQSCSLLPLSYLMQSIYSTLLVLRE). N-linked (GlcNAc...) asparagine glycosylation occurs at N159. Residues 194–214 (VFLIGLMVLSTSYMVALLYMH) traverse the membrane as a helical segment. Topologically, residues 215-238 (RKQAQNLQGTSLSLKASAEQRATQ) are cytoplasmic. The helical transmembrane segment at 239 to 259 (TILMLMTFFVLMSIFDSIVSC) threads the bilayer. Over 260–269 (SRTMFLDDPT) the chain is Extracellular. A helical membrane pass occupies residues 270–290 (SYSIHIFVMHIYATVSPFVFI). The Cytoplasmic segment spans residues 291–302 (STEKHIVNILRG).

It belongs to the G-protein coupled receptor 1 family.

Its subcellular location is the cell membrane. Putative pheromone receptor implicated in the regulation of social and reproductive behavior. The sequence is that of Vomeronasal type-1 receptor 48 (Vmn1r48) from Mus musculus (Mouse).